Here is a 239-residue protein sequence, read N- to C-terminus: Serine protease SplF (239 aa).

Positions Met1–Ala36 are cleaved as a signal peptide. Catalysis depends on charge relay system residues His75, Asp114, and Ser192.

This sequence belongs to the peptidase S1B family.

It is found in the secreted. The polypeptide is Serine protease SplF (splF) (Staphylococcus aureus (strain USA300)).